We begin with the raw amino-acid sequence, 493 residues long: Probable phospho-2-dehydro-3-deoxyheptonate aldolase, chloroplastic (493 aa).

The N-terminal 58 residues, 1–58 (MAMSNTSALASKLLPSCKPHQPTLTFFSPSTTCQKKPRSSRPISAAVHVTQPPKTPIS), are a transit peptide targeting the chloroplast.

The protein belongs to the class-II DAHP synthase family.

It localises to the plastid. The protein localises to the chloroplast. The enzyme catalyses D-erythrose 4-phosphate + phosphoenolpyruvate + H2O = 7-phospho-2-dehydro-3-deoxy-D-arabino-heptonate + phosphate. Its pathway is metabolic intermediate biosynthesis; chorismate biosynthesis; chorismate from D-erythrose 4-phosphate and phosphoenolpyruvate: step 1/7. The sequence is that of Probable phospho-2-dehydro-3-deoxyheptonate aldolase, chloroplastic (DHS1) from Catharanthus roseus (Madagascar periwinkle).